Consider the following 720-residue polypeptide: Phosphoribosylformylglycinamidine synthase subunit PurL (720 aa).

H47 is an active-site residue. Positions 50 and 89 each coordinate ATP. Position 91 (E91) interacts with Mg(2+). Substrate-binding positions include 92 to 95 and R114; that span reads SHNH. H93 functions as the Proton acceptor in the catalytic mechanism. D115 is a binding site for Mg(2+). Q238 contacts substrate. D266 is a Mg(2+) binding site. 310-312 contributes to the substrate binding site; that stretch reads ESQ. Residues D488 and G525 each contribute to the ATP site. Residue N526 participates in Mg(2+) binding. S528 provides a ligand contact to substrate.

The protein belongs to the FGAMS family. In terms of assembly, monomer. Part of the FGAM synthase complex composed of 1 PurL, 1 PurQ and 2 PurS subunits.

The protein localises to the cytoplasm. It catalyses the reaction N(2)-formyl-N(1)-(5-phospho-beta-D-ribosyl)glycinamide + L-glutamine + ATP + H2O = 2-formamido-N(1)-(5-O-phospho-beta-D-ribosyl)acetamidine + L-glutamate + ADP + phosphate + H(+). Its pathway is purine metabolism; IMP biosynthesis via de novo pathway; 5-amino-1-(5-phospho-D-ribosyl)imidazole from N(2)-formyl-N(1)-(5-phospho-D-ribosyl)glycinamide: step 1/2. Part of the phosphoribosylformylglycinamidine synthase complex involved in the purines biosynthetic pathway. Catalyzes the ATP-dependent conversion of formylglycinamide ribonucleotide (FGAR) and glutamine to yield formylglycinamidine ribonucleotide (FGAM) and glutamate. The FGAM synthase complex is composed of three subunits. PurQ produces an ammonia molecule by converting glutamine to glutamate. PurL transfers the ammonia molecule to FGAR to form FGAM in an ATP-dependent manner. PurS interacts with PurQ and PurL and is thought to assist in the transfer of the ammonia molecule from PurQ to PurL. This is Phosphoribosylformylglycinamidine synthase subunit PurL from Cereibacter sphaeroides (strain ATCC 17023 / DSM 158 / JCM 6121 / CCUG 31486 / LMG 2827 / NBRC 12203 / NCIMB 8253 / ATH 2.4.1.) (Rhodobacter sphaeroides).